Here is a 377-residue protein sequence, read N- to C-terminus: 4-hydroxy-3-methylbut-2-en-1-yl diphosphate synthase (flavodoxin) (377 aa).

Cys-275, Cys-278, Cys-310, and Glu-317 together coordinate [4Fe-4S] cluster.

The protein belongs to the IspG family. [4Fe-4S] cluster serves as cofactor.

It catalyses the reaction (2E)-4-hydroxy-3-methylbut-2-enyl diphosphate + oxidized [flavodoxin] + H2O + 2 H(+) = 2-C-methyl-D-erythritol 2,4-cyclic diphosphate + reduced [flavodoxin]. Its pathway is isoprenoid biosynthesis; isopentenyl diphosphate biosynthesis via DXP pathway; isopentenyl diphosphate from 1-deoxy-D-xylulose 5-phosphate: step 5/6. In terms of biological role, converts 2C-methyl-D-erythritol 2,4-cyclodiphosphate (ME-2,4cPP) into 1-hydroxy-2-methyl-2-(E)-butenyl 4-diphosphate. This chain is 4-hydroxy-3-methylbut-2-en-1-yl diphosphate synthase (flavodoxin), found in Jannaschia sp. (strain CCS1).